We begin with the raw amino-acid sequence, 236 residues long: Pyridoxine 5'-phosphate synthase (236 aa).

Asn-6 lines the 3-amino-2-oxopropyl phosphate pocket. Residue 8 to 9 (DH) participates in 1-deoxy-D-xylulose 5-phosphate binding. Arg-17 is a 3-amino-2-oxopropyl phosphate binding site. The active-site Proton acceptor is His-42. The 1-deoxy-D-xylulose 5-phosphate site is built by Arg-44 and His-49. Residue Glu-69 is the Proton acceptor of the active site. 1-deoxy-D-xylulose 5-phosphate is bound at residue Thr-99. The Proton donor role is filled by His-190. Residues Gly-191 and 212–213 (GH) contribute to the 3-amino-2-oxopropyl phosphate site.

The protein belongs to the PNP synthase family. As to quaternary structure, homooctamer; tetramer of dimers.

The protein resides in the cytoplasm. It carries out the reaction 3-amino-2-oxopropyl phosphate + 1-deoxy-D-xylulose 5-phosphate = pyridoxine 5'-phosphate + phosphate + 2 H2O + H(+). Its pathway is cofactor biosynthesis; pyridoxine 5'-phosphate biosynthesis; pyridoxine 5'-phosphate from D-erythrose 4-phosphate: step 5/5. In terms of biological role, catalyzes the complicated ring closure reaction between the two acyclic compounds 1-deoxy-D-xylulose-5-phosphate (DXP) and 3-amino-2-oxopropyl phosphate (1-amino-acetone-3-phosphate or AAP) to form pyridoxine 5'-phosphate (PNP) and inorganic phosphate. The protein is Pyridoxine 5'-phosphate synthase of Prosthecochloris aestuarii (strain DSM 271 / SK 413).